Here is a 142-residue protein sequence, read N- to C-terminus: Putative pre-16S rRNA nuclease (142 aa).

The protein belongs to the YqgF nuclease family.

It localises to the cytoplasm. Could be a nuclease involved in processing of the 5'-end of pre-16S rRNA. This Nitratidesulfovibrio vulgaris (strain DSM 19637 / Miyazaki F) (Desulfovibrio vulgaris) protein is Putative pre-16S rRNA nuclease.